Consider the following 409-residue polypeptide: Probable beta-1,3-galactosyltransferase 3 (409 aa).

Residues Trp20–Ile42 traverse the membrane as a helical; Signal-anchor for type II membrane protein segment.

Belongs to the glycosyltransferase 31 family. The cofactor is Mn(2+).

The protein resides in the golgi apparatus membrane. It functions in the pathway protein modification; protein glycosylation. Its function is as follows. Beta-1,3-galactosyltransferase that transfers galactose from UDP-galactose to substrates with a terminal glycosyl residue. In Arabidopsis thaliana (Mouse-ear cress), this protein is Probable beta-1,3-galactosyltransferase 3 (B3GALT3).